The following is a 431-amino-acid chain: Histidinol dehydrogenase 1 (431 aa).

NAD(+)-binding residues include Y127, Q188, and N211. 3 residues coordinate substrate: S234, Q256, and H259. 2 residues coordinate Zn(2+): Q256 and H259. Active-site proton acceptor residues include E324 and H325. The substrate site is built by H325, D358, E412, and H417. D358 is a Zn(2+) binding site. Zn(2+) is bound at residue H417.

This sequence belongs to the histidinol dehydrogenase family. Requires Zn(2+) as cofactor.

It carries out the reaction L-histidinol + 2 NAD(+) + H2O = L-histidine + 2 NADH + 3 H(+). It functions in the pathway amino-acid biosynthesis; L-histidine biosynthesis; L-histidine from 5-phospho-alpha-D-ribose 1-diphosphate: step 9/9. Its function is as follows. Catalyzes the sequential NAD-dependent oxidations of L-histidinol to L-histidinaldehyde and then to L-histidine. This Nostoc sp. (strain PCC 7120 / SAG 25.82 / UTEX 2576) protein is Histidinol dehydrogenase 1 (hisD1).